Here is a 185-residue protein sequence, read N- to C-terminus: MVRYAATPANPAKSASARGSYLRVSFKNTRETAQAINGWKLEKAQKYLDQVLDHQRAIPFRRYNSSIGRTGQGKEFGVTKARWPAKSVNFVKDLLRNAQANAEAKGLDSSKLVISHIQVNHAPKQRRRTYRAHGRINAYQSTPSHIELTLTEEDEIVEKPVEQKQIRLNSRQRGRLASQKRLTAA.

This sequence belongs to the universal ribosomal protein uL22 family. As to quaternary structure, component of the large ribosomal subunit. Mature ribosomes consist of a small (40S) and a large (60S) subunit. The 40S subunit contains about 32 different proteins and 1 molecule of RNA (18S). The 60S subunit contains 45 different proteins and 3 molecules of RNA (25S, 5.8S and 5S).

It localises to the cytoplasm. Functionally, component of the ribosome, a large ribonucleoprotein complex responsible for the synthesis of proteins in the cell. The small ribosomal subunit (SSU) binds messenger RNAs (mRNAs) and translates the encoded message by selecting cognate aminoacyl-transfer RNA (tRNA) molecules. The large subunit (LSU) contains the ribosomal catalytic site termed the peptidyl transferase center (PTC), which catalyzes the formation of peptide bonds, thereby polymerizing the amino acids delivered by tRNAs into a polypeptide chain. The nascent polypeptides leave the ribosome through a tunnel in the LSU and interact with protein factors that function in enzymatic processing, targeting, and the membrane insertion of nascent chains at the exit of the ribosomal tunnel. This Candida albicans (strain SC5314 / ATCC MYA-2876) (Yeast) protein is Large ribosomal subunit protein uL22.